The primary structure comprises 237 residues: Uridylate kinase (237 aa).

11–14 serves as a coordination point for ATP; that stretch reads KLSG. A UMP-binding site is contributed by G53. Residues G54 and R58 each contribute to the ATP site. UMP-binding positions include D73 and 134–141; that span reads TGNPFFTT. ATP contacts are provided by T161, Y167, and D170.

This sequence belongs to the UMP kinase family. Homohexamer.

Its subcellular location is the cytoplasm. It carries out the reaction UMP + ATP = UDP + ADP. It functions in the pathway pyrimidine metabolism; CTP biosynthesis via de novo pathway; UDP from UMP (UMPK route): step 1/1. Inhibited by UTP. Catalyzes the reversible phosphorylation of UMP to UDP. The polypeptide is Uridylate kinase (Burkholderia ambifaria (strain ATCC BAA-244 / DSM 16087 / CCUG 44356 / LMG 19182 / AMMD) (Burkholderia cepacia (strain AMMD))).